The chain runs to 149 residues: Transcriptional repressor NrdR (149 aa).

Residues 3–34 (CPFCSENDTKVIDSRLVADGHQVRRRRQCLAC) fold into a zinc finger. The ATP-cone domain maps to 49–139 (PKVIKSNGNR…VYRSFEDIRE (91 aa)).

This sequence belongs to the NrdR family. It depends on Zn(2+) as a cofactor.

Its function is as follows. Negatively regulates transcription of bacterial ribonucleotide reductase nrd genes and operons by binding to NrdR-boxes. The chain is Transcriptional repressor NrdR from Vibrio parahaemolyticus serotype O3:K6 (strain RIMD 2210633).